Consider the following 195-residue polypeptide: Probable DNA-directed RNA polymerase subunit delta (195 aa).

Positions 14–83 (LSMIEVARAI…GDNKWGLRSW (70 aa)) constitute an HTH HARE-type domain. 2 stretches are compositionally biased toward acidic residues: residues 120–138 (DSDA…DAYE) and 145–195 (YDDE…TSEE). A disordered region spans residues 120–195 (DSDAIDYNAD…SDDDAETSEE (76 aa)).

Belongs to the RpoE family. As to quaternary structure, RNAP is composed of a core of 2 alpha, a beta and a beta' subunits. The core is associated with a delta subunit and one of several sigma factors.

In terms of biological role, participates in both the initiation and recycling phases of transcription. In the presence of the delta subunit, RNAP displays an increased specificity of transcription, a decreased affinity for nucleic acids, and an increased efficiency of RNA synthesis because of enhanced recycling. The sequence is that of Probable DNA-directed RNA polymerase subunit delta from Streptococcus pneumoniae serotype 2 (strain D39 / NCTC 7466).